The following is a 595-amino-acid chain: MKMSTMFGATLHTAPGRSESEGHQLLQRAAMLRQVGQGIFAYLPLGWRTIRKIEAVLRAELERVGGQEVSMPVVNPAELWKQTGRYFTIGPELARFRDRRGRDLVLAMTHEELVTFLGRSEIESYRHLPRMVFQLQTKFRDDPRPRAGLIRVREFVMKDAYSFDVDAAGLAARYRAQYQAYLTIFRRCGLPVAAVLSDVGMMGGSLAHEFVYLTPIGEDTLLICDSCGFAANREAATFGKPAPSTAPWAELAEIATPGATTIEALTAALGVPAAETAKAIFLAASREDRDQTVDTEFILAVVRGDMEANETKIGNLVQAAELRPMTVEEISKIGAVAGYGSPVGVTGVTVVVDELVAASTNLVAGANREGMHLRNVNVGRDFVADHTGDITAARAGDACAECGSELRTARGVEVGQIFKLGTRYSTALGAEYLDADGQRKPLTMGCYGIGVGRLLACLAEEHRDERGLRLPVTIAPYQVHLTLLDDLASAAGELARRVYDELWAAGVEVLFDDRDERAGVKFADADVIGLPLRVTIGRRSVANGAAEVRDRATGVTAQVPFDEVVAELVRRIAALRADIDATVVPVELPAEVFAP.

The disordered stretch occupies residues 1–22; that stretch reads MKMSTMFGATLHTAPGRSESEG.

The protein belongs to the class-II aminoacyl-tRNA synthetase family. ProS type 1 subfamily. As to quaternary structure, homodimer.

Its subcellular location is the cytoplasm. The catalysed reaction is tRNA(Pro) + L-proline + ATP = L-prolyl-tRNA(Pro) + AMP + diphosphate. Functionally, catalyzes the attachment of proline to tRNA(Pro) in a two-step reaction: proline is first activated by ATP to form Pro-AMP and then transferred to the acceptor end of tRNA(Pro). As ProRS can inadvertently accommodate and process non-cognate amino acids such as alanine and cysteine, to avoid such errors it has two additional distinct editing activities against alanine. One activity is designated as 'pretransfer' editing and involves the tRNA(Pro)-independent hydrolysis of activated Ala-AMP. The other activity is designated 'posttransfer' editing and involves deacylation of mischarged Ala-tRNA(Pro). The misacylated Cys-tRNA(Pro) is not edited by ProRS. The polypeptide is Proline--tRNA ligase (Salinispora tropica (strain ATCC BAA-916 / DSM 44818 / JCM 13857 / NBRC 105044 / CNB-440)).